A 128-amino-acid chain; its full sequence is Small ribosomal subunit protein uS13 (128 aa).

The interval 85–128 (GSYRGLRHRRSLPVRGQRTHTNARTRKGPRRGTVANKKKATGKT) is disordered. Basic residues predominate over residues 89–128 (GLRHRRSLPVRGQRTHTNARTRKGPRRGTVANKKKATGKT).

This sequence belongs to the universal ribosomal protein uS13 family. As to quaternary structure, part of the 30S ribosomal subunit. Forms a loose heterodimer with protein S19. Forms two bridges to the 50S subunit in the 70S ribosome.

Its function is as follows. Located at the top of the head of the 30S subunit, it contacts several helices of the 16S rRNA. In the 70S ribosome it contacts the 23S rRNA (bridge B1a) and protein L5 of the 50S subunit (bridge B1b), connecting the 2 subunits; these bridges are implicated in subunit movement. Contacts the tRNAs in the A and P-sites. This is Small ribosomal subunit protein uS13 from Solibacter usitatus (strain Ellin6076).